The following is a 73-amino-acid chain: Protein SlyX homolog (73 aa).

The tract at residues 54 to 73 is disordered; sequence LQQAESNAPAAPANERPPHY. The segment covering 57 to 67 has biased composition (low complexity); sequence AESNAPAAPAN.

Belongs to the SlyX family.

The chain is Protein SlyX homolog from Rhodopseudomonas palustris (strain BisA53).